Reading from the N-terminus, the 931-residue chain is MEPDIIRMYSSSPPPLDNGAEDDEEDEFGEFGGFSEVSPSGVGFVDFDTPDYTRPKEDFVPSNHFMPIHEYSEDVDSLTSFKSVQNGNDKDITAELSTPVKSQSDVVLSTTSKEMIPSKTLDPSIDGMESLEDLDKVVVQGPSTGQLRSFSPGDFRTDKNIVHQTKQLESCNGEKPPCLEILTNGFAGLETVNPQGTDDLDNVADSKGSKPLNTCGTECILESAASHATEFADFSTFSQTERTQLEEIECPVLNDGDTLTIQGNSKGPRVKELNCVKEVTLDGSFEDTGNTEREHQVCVSEIHAVADRGLSVEKQDLQTLQQDEFLNSRIQSEAWSLVDSSENSEAITKERCKMEKNDLFASKCADLSMDSVKTSDVNEIGSSKEENRKLTNPKSPDPDPTGQNALDDSAASMKNGDSGNGFVTCHDTNEDDFGDFGTANGTTPPFVTSTQDSMSDVTFEDSSEHFLHLSEPGDDFGEFEDTNAVSCQEEMRFTESDLRQTSDGLSEECPLAGESGGKDSKPDSKLKNGQDSEFGDFDSVPNTQGSAFQDSDDFADFSSAGPSQAVDWNAFEDEQKDGCSWAAFGDQQETESHHLKEVWQSQRTDETMGTLGTPKMHSVSSAASKGAVASGHLQEPGTSVQTALLNRLERIFEACFPSVFVPDVEEEVSSLKHLLETHSSPAKTREALADRGELRGVWTELQDIHDAHGLRYQWGGSHSNKKLLCSLGIDTRNILFTGNKKQPVIVPMYAAGLGMLEPTKEPLKPLSAAEKIASIGQTTVMTPEINTCTSDPFQESLPPVQFDWSSSGLTNPLDASGGSTLLNLDFFGPVDDSSSSSSTIPGVDPELYELTTAKLETSTSSLRVTDAFAKLMSTVEKTSTSTRKPKREEHLSEEAMKVIASLPDLTFMHAKVLMFPATLTPSMSSQEQADA.

The segment at 1–49 is disordered; sequence MEPDIIRMYSSSPPPLDNGAEDDEEDEFGEFGGFSEVSPSGVGFVDFDT. The segment covering 19–29 has biased composition (acidic residues); sequence GAEDDEEDEFG. Residues 28 to 31 carry the WXXF motif 1 motif; it reads FGEF. Residues 33–45 show a composition bias toward low complexity; sequence GFSEVSPSGVGFV. Ser151 bears the Phosphoserine mark. Positions 371–381 are enriched in polar residues; sequence SVKTSDVNEIG. The interval 371 to 454 is disordered; that stretch reads SVKTSDVNEI…PFVTSTQDSM (84 aa). The residue at position 395 (Ser395) is a Phosphoserine. The WXXF motif 2 signature appears at 433–436; it reads FGDF. The segment covering 439–454 has biased composition (polar residues); the sequence is ANGTTPPFVTSTQDSM. Residues 476-479 carry the WXXF motif 3 motif; the sequence is FGEF. 2 disordered regions span residues 494-561 and 599-636; these read TESD…SSAG and WQSQ…LQEP. The span at 516–530 shows a compositional bias: basic and acidic residues; sequence GGKDSKPDSKLKNGQ. The residue at position 613 (Thr613) is a Phosphothreonine. Over residues 618-631 the composition is skewed to low complexity; the sequence is SVSSAASKGAVASG. Residues 712 to 714 carry the CLTCL1/Clathrin-binding motif; that stretch reads YQW. Residues 821-825 are clathrin-binding; the sequence is LLNLD.

Self-associates. Interacts with GGA1 (via GAE domain). Interacts with GGA3 (via GAE domain), AP1G1 (via GAE domain) and AP1G2 (via GAE domain). Component of the aftiphilin/p200/gamma-synergin complex, at least composed of AFTPH/aftiphilin, HEATR5B/p200a and SYNRG/gamma-synergin, which plays a role in the AP1G1/AP-1-mediated protein trafficking from early to recycling endosomes. Within the complex interacts with HEATR5B/p200a and SYNRG/gamma-synergin; the interactions are direct. Interacts with AP1G1/AP-1; the interaction is required to recruit AFTPH/aftiphilin to the perinuclear region of the cell. Interacts with CLTCL1/Clathrin.

The protein resides in the cytoplasm. It is found in the perinuclear region. It localises to the cytoplasmic vesicle. The protein localises to the clathrin-coated vesicle. Functionally, component of clathrin-coated vesicles. Component of the aftiphilin/p200/gamma-synergin complex, which plays roles in AP1G1/AP-1-mediated protein trafficking including the trafficking of transferrin from early to recycling endosomes, and the membrane trafficking of furin and the lysosomal enzyme cathepsin D between the trans-Golgi network (TGN) and endosomes. This is Aftiphilin (Aftph) from Mus musculus (Mouse).